The following is a 433-amino-acid chain: V-type ATP synthase beta chain (433 aa).

Belongs to the ATPase alpha/beta chains family.

In terms of biological role, produces ATP from ADP in the presence of a proton gradient across the membrane. The V-type beta chain is a regulatory subunit. This is V-type ATP synthase beta chain from Borrelia turicatae (strain 91E135).